Consider the following 283-residue polypeptide: 2-dehydro-3-deoxyphosphooctonate aldolase (283 aa).

Belongs to the KdsA family.

Its subcellular location is the cytoplasm. It catalyses the reaction D-arabinose 5-phosphate + phosphoenolpyruvate + H2O = 3-deoxy-alpha-D-manno-2-octulosonate-8-phosphate + phosphate. It functions in the pathway carbohydrate biosynthesis; 3-deoxy-D-manno-octulosonate biosynthesis; 3-deoxy-D-manno-octulosonate from D-ribulose 5-phosphate: step 2/3. Its pathway is bacterial outer membrane biogenesis; lipopolysaccharide biosynthesis. This Methylococcus capsulatus (strain ATCC 33009 / NCIMB 11132 / Bath) protein is 2-dehydro-3-deoxyphosphooctonate aldolase.